The sequence spans 512 residues: Respiratory nitrate reductase 1 beta chain (512 aa).

3 4Fe-4S ferredoxin-type domains span residues Val-7–Gly-35, Thr-175–Glu-206, and Gly-208–Lys-237. [4Fe-4S] cluster is bound by residues Cys-16, Cys-19, Cys-22, Cys-26, Cys-184, Cys-187, and Cys-192. Cys-196, Cys-217, and Cys-223 together coordinate [3Fe-4S] cluster. 5 residues coordinate [4Fe-4S] cluster: Cys-227, Cys-244, Cys-247, Cys-259, and Cys-263.

In terms of assembly, dimer of heterotrimers each composed of an alpha, a beta and a gamma chain. Alpha and beta are catalytic chains; gamma chains are involved in binding the enzyme complex to the cytoplasmic membrane. [4Fe-4S] cluster serves as cofactor. [3Fe-4S] cluster is required as a cofactor.

The protein resides in the cell membrane. It carries out the reaction nitrate + a quinol = a quinone + nitrite + H2O. Its function is as follows. The nitrate reductase enzyme complex allows E.coli to use nitrate as an electron acceptor during anaerobic growth. The beta chain is an electron transfer unit containing four cysteine clusters involved in the formation of iron-sulfur centers. Electrons are transferred from the gamma chain to the molybdenum cofactor of the alpha subunit. In Escherichia coli (strain K12), this protein is Respiratory nitrate reductase 1 beta chain (narH).